The primary structure comprises 550 residues: Ribosomal protein S6 kinase beta (550 aa).

Residues 83-344 enclose the Protein kinase domain; sequence FQLLKVLGKG…AEEIKSHAFF (262 aa). ATP is bound by residues 89 to 97 and Lys-115; that span reads LGKGGYGKV. The active-site Proton acceptor is the Asp-210. The 71-residue stretch at 345-415 folds into the AGC-kinase C-terminal domain; sequence KTTDWNLVYA…VAPSVLEMMN (71 aa). Thr-404 is subject to Phosphothreonine. Disordered stretches follow at residues 433-466 and 484-550; these read RAGA…GPNS and TAGG…KRVM. A Phosphoserine modification is found at Ser-439. The segment covering 520–534 has biased composition (low complexity); the sequence is TTTGNGSTTTTRPSN.

It belongs to the protein kinase superfamily. AGC Ser/Thr protein kinase family. S6 kinase subfamily. The cofactor is Mg(2+). In terms of processing, may be phosphorylated on Thr-404 by let-363/TOR.

The protein localises to the cell projection. The protein resides in the axon. Its subcellular location is the perikaryon. The catalysed reaction is L-seryl-[protein] + ATP = O-phospho-L-seryl-[protein] + ADP + H(+). It catalyses the reaction L-threonyl-[protein] + ATP = O-phospho-L-threonyl-[protein] + ADP + H(+). Serine/threonine-protein kinase which regulates mRNA translation. Negatively regulates lifespan and resistance to starvation, oxidative stress, protein aggregation and P.aeruginosa-mediated infection. May regulate these processes by preventing the activation of transcription factor hif-1. Required, probably downstream of let-363/TOR, for the establishment of the proper number of germline progenitors by promoting cell cycle progression and preventing differentiation during larval development. Regulates germ cell size. In addition required for sperm production and embryo viability. Involved in axon regeneration of PLM and ALM neurons by inhibiting growth cone formation early after axotomy and later by inhibiting axon extension. Functions in axon regeneration and lifespan probably by preventing aak-2/AMPK activation. Negatively regulates autophagy. This chain is Ribosomal protein S6 kinase beta, found in Caenorhabditis elegans.